Reading from the N-terminus, the 123-residue chain is Con-ikot-ikot (123 aa).

Residues Met1–Ala18 form the signal peptide. The propeptide occupies Ala19–Arg37. Disulfide bonds link Cys49–Cys80, Cys50–Cys89, Cys57–Cys72, Cys90–Cys118, and Cys96–Cys113.

As to quaternary structure, homodimer; disulfide-linked. In terms of tissue distribution, expressed by the venom duct.

The protein localises to the secreted. In terms of biological role, potently and selectively blocks the desensitization of ionotropic glutamate AMPA receptors (GRIA1, GRIA2, GRIA3 and GRIA4). Binds to a different site than does the drug cyclothiazide. The toxin acts like a straitjacket on the 'gating ring' of the ligand-binding domain (LBD) of the receptor. It does so by restraining the domains via both intra- and interdimer cross-links such that agonist-induced closure of the LBD 'clamshells' is transduced into an irislike expansion of the gating ring. Compared to other desensitization blockers, it is a poor stabilizer of the open channel because toxin-bound AMPA receptors undergo frequent brief closures. In vitro, application of the toxin to hippocampal slices causes a large and rapid increase in resting AMPA receptor-mediated current leading to neuronal death. This Conus striatus (Striated cone) protein is Con-ikot-ikot.